A 159-amino-acid polypeptide reads, in one-letter code: NAD(P)H-quinone oxidoreductase subunit J, chloroplastic (159 aa).

The protein belongs to the complex I 30 kDa subunit family. In terms of assembly, NDH is composed of at least 16 different subunits, 5 of which are encoded in the nucleus.

Its subcellular location is the plastid. It localises to the chloroplast thylakoid membrane. It carries out the reaction a plastoquinone + NADH + (n+1) H(+)(in) = a plastoquinol + NAD(+) + n H(+)(out). The enzyme catalyses a plastoquinone + NADPH + (n+1) H(+)(in) = a plastoquinol + NADP(+) + n H(+)(out). In terms of biological role, NDH shuttles electrons from NAD(P)H:plastoquinone, via FMN and iron-sulfur (Fe-S) centers, to quinones in the photosynthetic chain and possibly in a chloroplast respiratory chain. The immediate electron acceptor for the enzyme in this species is believed to be plastoquinone. Couples the redox reaction to proton translocation, and thus conserves the redox energy in a proton gradient. The sequence is that of NAD(P)H-quinone oxidoreductase subunit J, chloroplastic from Populus trichocarpa (Western balsam poplar).